The sequence spans 665 residues: Kinesin-like protein KIF22 (665 aa).

A Kinesin motor domain is found at R43–V368. G127 to T134 is an ATP binding site. Positions Q379 to P428 are disordered. Residues S412, S427, and S452 each carry the phosphoserine modification. Low complexity predominate over residues S412–P428. A Glycyl lysine isopeptide (Lys-Gly) (interchain with G-Cter in SUMO2) cross-link involves residue K465. The stretch at K465–C508 forms a coiled coil. Residues S543, S562, and S581 each carry the phosphoserine modification.

Belongs to the TRAFAC class myosin-kinesin ATPase superfamily. Kinesin family. Interacts with FAM83D. Interacts with SIAH1. In terms of processing, ubiquitinated; mediated by SIAH1 and leading to its subsequent proteasomal degradation. In terms of tissue distribution, expressed in bone, cartilage, joint capsule, ligament, skin, and primary cultured chondrocytes.

Its subcellular location is the nucleus. It localises to the cytoplasm. The protein localises to the cytoskeleton. Kinesin family member that is involved in spindle formation and the movements of chromosomes during mitosis and meiosis. Binds to microtubules and to DNA. Plays a role in congression of laterally attached chromosomes in NDC80-depleted cells. In Homo sapiens (Human), this protein is Kinesin-like protein KIF22 (KIF22).